The following is a 235-amino-acid chain: 1-(5-phosphoribosyl)-5-[(5-phosphoribosylamino)methylideneamino] imidazole-4-carboxamide isomerase (235 aa).

The active-site Proton acceptor is the aspartate 8. The Proton donor role is filled by aspartate 128.

Belongs to the HisA/HisF family.

The protein localises to the cytoplasm. It carries out the reaction 1-(5-phospho-beta-D-ribosyl)-5-[(5-phospho-beta-D-ribosylamino)methylideneamino]imidazole-4-carboxamide = 5-[(5-phospho-1-deoxy-D-ribulos-1-ylimino)methylamino]-1-(5-phospho-beta-D-ribosyl)imidazole-4-carboxamide. The protein operates within amino-acid biosynthesis; L-histidine biosynthesis; L-histidine from 5-phospho-alpha-D-ribose 1-diphosphate: step 4/9. This is 1-(5-phosphoribosyl)-5-[(5-phosphoribosylamino)methylideneamino] imidazole-4-carboxamide isomerase from Thermus thermophilus (strain ATCC BAA-163 / DSM 7039 / HB27).